The chain runs to 634 residues: DNA gyrase subunit B (634 aa).

Residues 1–220 (MSYDASAIRV…EEVFLDKGGV (220 aa)) form an ATPase domain region. The transducer domain stretch occupies residues 221–390 (ASFAKALAEG…EAARKARELV (170 aa)). A Toprim domain is found at 416–534 (AELFIVEGDS…RGHVYIAQPP (119 aa)). Residues Glu422, Asp499, and Asp501 each coordinate Mg(2+).

The protein belongs to the type II topoisomerase GyrB family. As to quaternary structure, heterotetramer, composed of two GyrA and two GyrB chains. Non-hydrolyzable ATP analogs induce dimerization, novobiocin also induces a small amount of dimerization. The two subunits form an intertwined dimer where the GyrB ATPase transducer helix of 1 subunit connects to the Toprim domain of the other GyrB subunit through a 10 residue linker. In the heterotetramer, GyrA contains the active site tyrosine that forms a covalent intermediate with the DNA, while GyrB binds cofactors and catalyzes ATP hydrolysis. Mg(2+) is required as a cofactor. The cofactor is Mn(2+). It depends on Ca(2+) as a cofactor.

It is found in the cytoplasm. The enzyme catalyses ATP-dependent breakage, passage and rejoining of double-stranded DNA.. In terms of biological role, a type II topoisomerase that negatively supercoils closed circular double-stranded (ds) DNA in an ATP-dependent manner. It probably also catalyzes the interconversion of other topological isomers of double-stranded DNA rings, including catenanes. Relaxes negatively supercoiled DNA in an ATP-independent manner. At comparable concentrations T.thermophilus gyrase does not introduce as many negative supercoils into DNA as the E.coli enzyme. Its function is as follows. Negative supercoiling favors strand separation, and DNA replication, transcription, recombination and repair, all of which involve strand separation. Type II topoisomerases break and join 2 DNA strands simultaneously in an ATP-dependent manner. This is DNA gyrase subunit B from Thermus thermophilus (strain ATCC 27634 / DSM 579 / HB8).